A 91-amino-acid chain; its full sequence is Small ribosomal subunit protein uS15 (91 aa).

The protein belongs to the universal ribosomal protein uS15 family. In terms of assembly, part of the 30S ribosomal subunit. Forms a bridge to the 50S subunit in the 70S ribosome, contacting the 23S rRNA.

In terms of biological role, one of the primary rRNA binding proteins, it binds directly to 16S rRNA where it helps nucleate assembly of the platform of the 30S subunit by binding and bridging several RNA helices of the 16S rRNA. Its function is as follows. Forms an intersubunit bridge (bridge B4) with the 23S rRNA of the 50S subunit in the ribosome. This chain is Small ribosomal subunit protein uS15, found in Deinococcus geothermalis (strain DSM 11300 / CIP 105573 / AG-3a).